Here is a 1483-residue protein sequence, read N- to C-terminus: Cystic fibrosis transmembrane conductance regulator (1483 aa).

Residues 1 to 77 (MQRSPLEKAS…KLINALRRCF (77 aa)) are Cytoplasmic-facing. A helical membrane pass occupies residues 78–98 (FWKFMFYGILLYLGEVTKAVQ). An ABC transmembrane type-1 1 domain is found at 81-365 (FMFYGILLYL…WAVQTWYDSL (285 aa)). Residues 99-122 (PLLLGRIIASYDPDNKVERSIAIY) lie on the Extracellular side of the membrane. Residues 123 to 146 (LGIGLCLLFVVRTLLLHPAIFGLH) form a helical membrane-spanning segment. Over 147-195 (HIGMQMRIAMFSLIYKKTLKLSSRVLDKISIGQLISLLSNNLNKFDEGL) the chain is Cytoplasmic. The chain crosses the membrane as a helical span at residues 196 to 216 (ALAHFVWIVPLQVTLLMGLLW). Residues 217-222 (ELLQAS) are Extracellular-facing. A helical membrane pass occupies residues 223 to 243 (AFCGLAFLIIVAFYQAGLGRM). Residues 244 to 298 (MMKYRDKRGGKINERLVITSEMIENIQSVKAYCWEEAMEKMIENLRQTELKLTRK) are Cytoplasmic-facing. The helical transmembrane segment at 299-319 (AAYVRYCNSSAFFFSGFFVVF) threads the bilayer. Residues 320-339 (LSVLPYALMKGIILRKIFTT) lie on the Extracellular side of the membrane. The helical transmembrane segment at 340–358 (ISFCIVLRMAVTRQFPWAV) threads the bilayer. Residues 359–859 (QTWYDSLGAI…YLRYITIHKS (501 aa)) lie on the Cytoplasmic side of the membrane. Residues tryptophan 401, serine 434, 458–465 (GSTGAGKT), and glutamine 493 contribute to the ATP site. The ABC transporter 1 domain occupies 423 to 646 (NGDNSLFFSN…RPDFSSKLMG (224 aa)). The S-palmitoyl cysteine moiety is linked to residue cysteine 524. Phosphoserine occurs at positions 549 and 660. The interval 654–832 (SAERRNSILT…EEINEEDLKE (179 aa)) is disordered R region. The residue at position 670 (serine 670) is a Phosphoserine; by PKA. At serine 686 the chain carries Phosphoserine. Residue lysine 688 forms a Glycyl lysine isopeptide (Lys-Gly) (interchain with G-Cter in ubiquitin) linkage. A phosphoserine mark is found at serine 700 and serine 712. Threonine 717 is modified (phosphothreonine). Serine 737, serine 768, serine 791, serine 796, and serine 814 each carry phosphoserine. Residues 860–880 (LIFVLIWCLIIFLAEVAVSLV) traverse the membrane as a helical segment. Positions 860-1157 (LIFVLIWCLI…AVNSSIDVDS (298 aa)) constitute an ABC transmembrane type-1 2 domain. Over 881-920 (FLLLFEKSPRQDTGNVTKSSNNSSYGVIITNTSSYYIIYI) the chain is Extracellular. Asparagine 895, asparagine 901, asparagine 902, and asparagine 911 each carry an N-linked (GlcNAc...) asparagine glycan. The chain crosses the membrane as a discontinuously helical span at residues 921 to 941 (YVGVADTLLALGLLRGLPLVH). The Cytoplasmic portion of the chain corresponds to 942–992 (TLITASKILHHKMLHSVLQAPMSTLNTLKAGGILNRFSKDIAILDDLLPLT). Residues 993–1013 (IFDFIQLILIVIGAVIVVSVL) traverse the membrane as a helical segment. The Extracellular portion of the chain corresponds to 1014–1015 (EP). Residues 1016–1036 (YIFLATVPVIIAFVMLRAYFL) traverse the membrane as a helical segment. At 1037 to 1097 (HTSQQLKQLE…TANWFLYLST (61 aa)) the chain is on the cytoplasmic side. The helical transmembrane segment at 1098 to 1118 (LRWFQMRIEMIFVIFFIAVTF) threads the bilayer. Residues 1119 to 1132 (ISILTTGDGEGRVG) are Extracellular-facing. A helical transmembrane segment spans residues 1133–1153 (IILTLAMNIMNTLQWAVNSSI). The Cytoplasmic segment spans residues 1154–1483 (DVDSLMRSVS…TEEEVQETRL (330 aa)). The ABC transporter 2 domain occupies 1213–1446 (MTVKDLTAKY…KSLFRQAISN (234 aa)). ATP-binding positions include tyrosine 1222 and 1247-1254 (GRTGSGKS). The interval 1389–1483 (RTIKQAFADC…TEEEVQETRL (95 aa)) is interaction with GORASP2. Cysteine 1398 is lipidated: S-palmitoyl cysteine. 2 positions are modified to phosphoserine: serine 1447 and serine 1459. The span at 1455 to 1465 (HRNSSKHKSRS) shows a compositional bias: basic residues. Positions 1455–1483 (HRNSSKHKSRSKIAALKEETEEEVQETRL) are disordered. A compositionally biased stretch (acidic residues) spans 1473 to 1483 (ETEEEVQETRL). The PDZ-binding signature appears at 1481-1483 (TRL).

This sequence belongs to the ABC transporter superfamily. ABCC family. CFTR transporter (TC 3.A.1.202) subfamily. In terms of assembly, monomer; does not require oligomerization for channel activity. May form oligomers in the membrane. Interacts with SLC26A3, SLC26A6 and NHERF1. Interacts with SHANK2. Interacts with MYO6. Interacts (via C-terminus) with GOPC (via PDZ domain); this promotes CFTR internalization and thereby decreases channel activity. Interacts with SLC4A7 through NHERF1. Found in a complex with MYO5B and RAB11A. Interacts with ANO1. Interacts with SLC26A8. Interacts with AHCYL1; the interaction increases CFTR activity. Interacts with CSE1L. The core-glycosylated form interacts with GORASP2 (via PDZ GRASP-type 1 domain) in respone to ER stress. Interacts with MARCHF2; the interaction leads to CFTR ubiqtuitination and degradation. Interacts with ADGRG2. Post-translationally, N-glycosylated. In terms of processing, phosphorylated; cAMP treatment promotes phosphorylation and activates the channel. Dephosphorylation decreases the ATPase activity (in vitro). Phosphorylation at PKA sites activates the channel. Phosphorylation at PKC sites enhances the response to phosphorylation by PKA. Phosphorylated by AMPK; this inhibits channel activity. Ubiquitinated, leading to its degradation in the lysosome. Deubiquitination by USP10 in early endosomes enhances its endocytic recycling to the cell membrane. Ubiquitinated by RNF185 during ER stress. Ubiquitinated by MARCHF2.

The protein localises to the apical cell membrane. It localises to the early endosome membrane. Its subcellular location is the cell membrane. It is found in the recycling endosome membrane. The protein resides in the endoplasmic reticulum membrane. The protein localises to the nucleus. It carries out the reaction ATP + H2O + closed Cl(-) channel = ADP + phosphate + open Cl(-) channel.. The enzyme catalyses chloride(in) = chloride(out). The catalysed reaction is hydrogencarbonate(in) = hydrogencarbonate(out). It catalyses the reaction ATP + H2O = ADP + phosphate + H(+). Its function is as follows. Epithelial ion channel that plays an important role in the regulation of epithelial ion and water transport and fluid homeostasis. Mediates the transport of chloride ions across the cell membrane. The ion channel is also permeable to HCO(3)(-); selectivity depends on the extracellular chloride concentration. Exerts its function also by modulating the activity of other ion channels and transporters. Contributes to the regulation of the pH and the ion content of the epithelial fluid layer. Modulates the activity of the epithelial sodium channel (ENaC) complex, in part by regulating the cell surface expression of the ENaC complex. May regulate bicarbonate secretion and salvage in epithelial cells by regulating the transporter SLC4A7. Can inhibit the chloride channel activity of ANO1. Plays a role in the chloride and bicarbonate homeostasis during sperm epididymal maturation and capacitation. The protein is Cystic fibrosis transmembrane conductance regulator of Atelerix albiventris (Middle-African hedgehog).